The sequence spans 516 residues: Putative GTP-binding protein 6 (516 aa).

A compositionally biased stretch (low complexity) spans 18–39 (GRGRSAPRAAAPSCPARALAAV). A disordered region spans residues 18–82 (GRGRSAPRAA…PEDADENAEE (65 aa)). Positions 57–67 (LRADGGRSRTG) are enriched in basic and acidic residues. Residues 68–82 (DDEEEPEDADENAEE) are compositionally biased toward acidic residues. The Hflx-type G domain occupies 295–459 (PVISVVGYTN…ELDAAVLKAT (165 aa)). Residues 301 to 308 (GYTNCGKT), 327 to 331 (FATLD), 349 to 352 (DTIG), 418 to 421 (NKVD), and 437 to 439 (SAL) contribute to the GTP site. Residues Thr308 and Thr329 each coordinate Mg(2+).

It belongs to the TRAFAC class OBG-HflX-like GTPase superfamily. HflX GTPase family. It depends on Mg(2+) as a cofactor. Ubiquitously expressed.

The sequence is that of Putative GTP-binding protein 6 (GTPBP6) from Homo sapiens (Human).